The primary structure comprises 259 residues: Global transcriptional regulator CodY (259 aa).

The segment at 1 to 155 (MDLLSRARKI…GATVVGMEIL (155 aa)) is GAF domain. Positions 203–222 (ASKIADRVGITRSVIVNALR) form a DNA-binding region, H-T-H motif. Position 215 is a phosphoserine (S215).

Belongs to the CodY family.

The protein resides in the cytoplasm. In terms of biological role, DNA-binding global transcriptional regulator which is involved in the adaptive response to starvation and acts by directly or indirectly controlling the expression of numerous genes in response to nutrient availability. During rapid exponential growth, CodY is highly active and represses genes whose products allow adaptation to nutrient depletion. This chain is Global transcriptional regulator CodY, found in Oceanobacillus iheyensis (strain DSM 14371 / CIP 107618 / JCM 11309 / KCTC 3954 / HTE831).